A 1320-amino-acid chain; its full sequence is Phosphoribosylformylglycinamidine synthase (1320 aa).

Residues 310–321 and Ala-686 each bind ATP; that span reads GAATGSGGEIRD. Residues Asp-687, Glu-726, Asn-730, and Asp-894 each contribute to the Mg(2+) site. Ser-896 contributes to the ATP binding site. The Glutamine amidotransferase type-1 domain maps to 1067–1320; that stretch reads VAILREQGVN…MFRNARAFIG (254 aa). The active-site Nucleophile is the Cys-1160. Active-site residues include His-1285 and Glu-1287.

This sequence in the N-terminal section; belongs to the FGAMS family. Monomer.

The protein resides in the cytoplasm. The catalysed reaction is N(2)-formyl-N(1)-(5-phospho-beta-D-ribosyl)glycinamide + L-glutamine + ATP + H2O = 2-formamido-N(1)-(5-O-phospho-beta-D-ribosyl)acetamidine + L-glutamate + ADP + phosphate + H(+). The protein operates within purine metabolism; IMP biosynthesis via de novo pathway; 5-amino-1-(5-phospho-D-ribosyl)imidazole from N(2)-formyl-N(1)-(5-phospho-D-ribosyl)glycinamide: step 1/2. Phosphoribosylformylglycinamidine synthase involved in the purines biosynthetic pathway. Catalyzes the ATP-dependent conversion of formylglycinamide ribonucleotide (FGAR) and glutamine to yield formylglycinamidine ribonucleotide (FGAM) and glutamate. This is Phosphoribosylformylglycinamidine synthase from Colwellia psychrerythraea (strain 34H / ATCC BAA-681) (Vibrio psychroerythus).